The primary structure comprises 369 residues: Glutamine synthetase (369 aa).

The 80-residue stretch at 23-102 (VIAEYIWVDS…VLAECWNNDG (80 aa)) folds into the GS beta-grasp domain. The 261-residue stretch at 109–369 (HRHEAAKLFE…MSKEFERESS (261 aa)) folds into the GS catalytic domain.

This sequence belongs to the glutamine synthetase family. As to quaternary structure, homooctamer.

The protein localises to the cytoplasm. The enzyme catalyses L-glutamate + NH4(+) + ATP = L-glutamine + ADP + phosphate + H(+). The polypeptide is Glutamine synthetase (GLN1) (Eremothecium gossypii (strain ATCC 10895 / CBS 109.51 / FGSC 9923 / NRRL Y-1056) (Yeast)).